Reading from the N-terminus, the 1064-residue chain is Lysine-specific demethylase 4A (1064 aa).

An N-acetylalanine modification is found at alanine 2. In terms of domain architecture, JmjN spans 14 to 56 (IMTFYPTMEEFRNFSRYIAYIESQGAHRAGLAKVVPPKEWKPR). Tyrosine 132 serves as a coordination point for 2-oxoglutarate. The JmjC domain maps to 142–308 (EQHVDEWNIG…YGKQAVLCSC (167 aa)). Fe cation is bound by residues histidine 188 and glutamate 190. Residues asparagine 198 and lysine 206 each contribute to the 2-oxoglutarate site. Zn(2+) contacts are provided by cysteine 234 and histidine 240. Position 241 (lysine 241) interacts with 2-oxoglutarate. Histidine 276 lines the Fe cation pocket. Zn(2+) is bound by residues cysteine 306 and cysteine 308. 5 disordered regions span residues 354–384 (LKDS…EEGD), 434–489 (LAPV…LDLS), 502–537 (SGSK…QGQE), 549–573 (RGDG…SISE), and 590–643 (NKKT…LSQL). Over residues 368–382 (ECPEEDVEAADQGEE) the composition is skewed to acidic residues. Residues 460–472 (TEVKFEELKNVKL) show a composition bias toward basic and acidic residues. The segment covering 473–482 (EEEDEEDEPE) has biased composition (acidic residues). Residues 509–525 (SSSLGSTSSQDSVSSDS) are compositionally biased toward low complexity. Serine 523 carries the phosphoserine modification. The span at 528–537 (AESVSCQGQE) shows a compositional bias: polar residues. Residues 593–608 (TKGRRQPLSKLPRHHP) are compositionally biased toward basic residues. The segment at 597-638 (RQPLSKLPRHHPLVLQECGSDDETSEQLTPEEEAEETEAWAK) is interaction with NCOR1. Acidic residues predominate over residues 615 to 634 (GSDDETSEQLTPEEEAEETE). A PHD-type 1 zinc finger spans residues 709-767 (MCFTTTGCSTDINLSTPYLEEDGTSMLVSCKKCSVRVHASCYGVPPAKASEEWMCSRCS). The C2HC pre-PHD-type zinc finger occupies 772-805 (EEDCCLCSLRGGALQRANDDRWVHVSCAVAILEA). The segment at 828–885 (LKCVFCKKRRKRNAGCCVQCSHGRCPTAFHVSCAQAAGVMMQPDDWPFVVFITCFRHK) adopts a PHD-type 2 zinc-finger fold. 2 consecutive Tudor domains span residues 897–954 (LSIT…CLQL) and 955–1011 (GPPA…EELP).

It belongs to the JHDM3 histone demethylase family. In terms of assembly, interacts with histone deacetylase proteins HDAC1, HDAC2 and HDAC3. Interacts with RB and NCOR1. Interacts with VRK1. Fe(2+) is required as a cofactor. In terms of processing, ubiquitinated by RNF8 and RNF168, leading to its degradation. Degradation promotes accessibility of H4K20me2 mark for DNA repair protein TP53BP1, which is then recruited. Also ubiquitinated by the SCF(FBXO22) complex; leading to proteasomal degradation. Widely expressed.

It localises to the nucleus. The enzyme catalyses N(6),N(6),N(6)-trimethyl-L-lysyl(9)-[histone H3] + 2 2-oxoglutarate + 2 O2 = N(6)-methyl-L-lysyl(9)-[histone H3] + 2 formaldehyde + 2 succinate + 2 CO2. It catalyses the reaction N(6),N(6),N(6)-trimethyl-L-lysyl(36)-[histone H3] + 2 2-oxoglutarate + 2 O2 = N(6)-methyl-L-lysyl(36)-[histone H3] + 2 formaldehyde + 2 succinate + 2 CO2. Its function is as follows. Histone demethylase that specifically demethylates 'Lys-9' and 'Lys-36' residues of histone H3, thereby playing a central role in histone code. Does not demethylate histone H3 'Lys-4', H3 'Lys-27' nor H4 'Lys-20'. Demethylates trimethylated H3 'Lys-9' and H3 'Lys-36' residue, while it has no activity on mono- and dimethylated residues. Demethylation of Lys residue generates formaldehyde and succinate. Participates in transcriptional repression of ASCL2 and E2F-responsive promoters via the recruitment of histone deacetylases and NCOR1, respectively. This chain is Lysine-specific demethylase 4A (Kdm4a), found in Mus musculus (Mouse).